Reading from the N-terminus, the 639-residue chain is Chaperone protein DnaK (639 aa).

At T199 the chain carries Phosphothreonine; by autocatalysis. Positions 602-613 are enriched in low complexity; sequence AQAQQAAAGAEG. Residues 602-639 are disordered; that stretch reads AQAQQAAAGAEGQPEDASAKQDDDVVDAEFEEVKDDKK. Over residues 625–639 the composition is skewed to acidic residues; sequence DVVDAEFEEVKDDKK.

This sequence belongs to the heat shock protein 70 family.

Acts as a chaperone. This Pseudoalteromonas atlantica (strain T6c / ATCC BAA-1087) protein is Chaperone protein DnaK.